Reading from the N-terminus, the 493-residue chain is MENLSERFNVLQDQLMNIYESAAETLESQIEHWQILRKEAVLLYFARRKGVTRIGYQPVPTLAVSEAKAKEAIGMVLQLQSLQKSEYGTEPWSLVDTSAETYRSAPENYFKKGPMPIEVIYDKDADNANLYTMWKFVYYVDEDDNWHKSESGVNHTGLYFMQGNFRHYYVLFADDARKYSATGHWEVKVNKETVFTPVTSSTPPDSPGGQRDPNTSSKTPTTTTDSASRLSPTASREQSQQTNTKGRRYERRPSSRTRRQTQTRQKRSRSKSKSRSRSRSRSLSSNRRSRSKSRRKASTTRGRGRGSPTATSDQSSRSPSATSSTTSLRSRGSSRVGRSRGGRSRVGRSRGRGKRSRESPSPTNTKRSRRQSGSSRLHGVSADAVGTSVHTVSGRNTGRLGRLLEEALDPPVILVRGEPNTLRSFRNRAKHMYRGLFSSFSTAWSWVAGDGIERLGRTRMLISFVSFNQRKHFDDTVRYPKGVDRSFGSFDSL.

A transactivation domain region spans residues 1-201; that stretch reads MENLSERFNV…ETVFTPVTSS (201 aa). A disordered region spans residues 196–395; it reads TPVTSSTPPD…GTSVHTVSGR (200 aa). Over residues 215 to 228 the composition is skewed to low complexity; sequence TSSKTPTTTTDSAS. Over residues 229-244 the composition is skewed to polar residues; the sequence is RLSPTASREQSQQTNT. Basic residues-rich tracts occupy residues 245–280 and 287–304; these read KGRRYERRPSSRTRRQTQTRQKRSRSKSKSRSRSRS and RRSRSKSRRKASTTRGRG. Residues 315–336 are compositionally biased toward low complexity; the sequence is SSRSPSATSSTTSLRSRGSSRV. Residues 337 to 355 are compositionally biased toward basic residues; that stretch reads GRSRGGRSRVGRSRGRGKR. A DNA-binding domain region spans residues 409 to 493; that stretch reads DPPVILVRGE…DRSFGSFDSL (85 aa).

Belongs to the papillomaviridae E2 protein family. Binds DNA as homodimer. Interacts with protein E1; this interaction greatly increases E1 DNA-binding activity. Interacts with protein L1; this interaction enhances E2-dependent replication and transcription activation. Interacts with protein L2; this interaction inhibits E2 transcriptional activity but not DNA replication function E2. Interacts with protein E7; this interaction inhibits E7 oncogenic activity. Interacts with host TAF1; this interaction modulates E2-dependent transcriptional regulation. Interacts with host BRD4; this interaction mediates E2 transcriptional activation function. Additionally, the interaction with host BRD4 on mitotic chromosomes mediates tethering of the viral genome. Interacts with host TOPBP1; this interaction is required for optimal viral DNA replication. In terms of processing, phosphorylated.

The protein resides in the host nucleus. Plays a role in the initiation of viral DNA replication. A dimer of E2 interacts with a dimer of E1 in order to improve specificity of E1 DNA binding activity. Once the complex recognizes and binds DNA at specific sites, the E2 dimer is removed from DNA. E2 also regulates viral transcription through binding to the E2RE response element (5'-ACCNNNNNNGGT-3') present in multiple copies in the regulatory regions of the viral genome. Activates or represses transcription depending on E2RE's position with regards to proximal promoter elements including the TATA-box. Repression occurs by sterically hindering the assembly of the transcription initiation complex. This is Regulatory protein E2 from Human papillomavirus 19.